We begin with the raw amino-acid sequence, 196 residues long: FMN-dependent NADH:quinone oxidoreductase (196 aa).

FMN contacts are provided by residues Ser-10 and 17 to 19; that span reads SYS.

The protein belongs to the azoreductase type 1 family. Homodimer. The cofactor is FMN.

It catalyses the reaction 2 a quinone + NADH + H(+) = 2 a 1,4-benzosemiquinone + NAD(+). It carries out the reaction N,N-dimethyl-1,4-phenylenediamine + anthranilate + 2 NAD(+) = 2-(4-dimethylaminophenyl)diazenylbenzoate + 2 NADH + 2 H(+). Functionally, quinone reductase that provides resistance to thiol-specific stress caused by electrophilic quinones. Also exhibits azoreductase activity. Catalyzes the reductive cleavage of the azo bond in aromatic azo compounds to the corresponding amines. The polypeptide is FMN-dependent NADH:quinone oxidoreductase (Metamycoplasma arthritidis (strain 158L3-1) (Mycoplasma arthritidis)).